The chain runs to 231 residues: Protein usf (231 aa).

In Aquifex pyrophilus, this protein is Protein usf (usf).